The primary structure comprises 374 residues: Phosphomevalonate kinase (374 aa).

The protein belongs to the GHMP kinase family. Homodimer. Mg(2+) serves as cofactor.

It catalyses the reaction (R)-5-phosphomevalonate + ATP = (R)-5-diphosphomevalonate + ADP. It functions in the pathway isoprenoid biosynthesis; isopentenyl diphosphate biosynthesis via mevalonate pathway; isopentenyl diphosphate from (R)-mevalonate: step 2/3. Catalyzes the phosphorylation of (R)-mevalonate 5-phosphate (MVAP) to (R)-mevalonate 5-diphosphate (MVAPP). Functions in the mevalonate (MVA) pathway leading to isopentenyl diphosphate (IPP), a key precursor for the biosynthesis of isoprenoid compounds. This is Phosphomevalonate kinase from Streptomyces sp. (strain CL190).